The following is a 93-amino-acid chain: U8-theraphotoxin-Hs1b (93 aa).

The N-terminal stretch at 1–18 is a signal peptide; sequence MKAILLLAIFSVLTVAIC. Intrachain disulfides connect Cys-40/Cys-54, Cys-40/Cys-81, Cys-53/Cys-66, and Cys-84/Cys-91.

This sequence belongs to the neurotoxin 27 (Jztx-72) family. ICK-72 subfamily. As to expression, expressed by the venom gland.

The protein localises to the secreted. Functionally, probable neurotoxin with ion channel impairing activity. This is U8-theraphotoxin-Hs1b from Cyriopagopus schmidti (Chinese bird spider).